We begin with the raw amino-acid sequence, 83 residues long: Retinal cone rhodopsin-sensitive cGMP 3',5'-cyclic phosphodiesterase subunit gamma (83 aa).

Residues 1–17 (MSDNTVLAPPTSNQGPT) are compositionally biased toward polar residues. The segment at 1-51 (MSDNTVLAPPTSNQGPTTPRKGPPKFKQRQTRQFKSKPPKKGVKGFGDDIP) is disordered. Residues 22 to 43 (GPPKFKQRQTRQFKSKPPKKGV) are compositionally biased toward basic residues.

Belongs to the rod/cone cGMP-PDE gamma subunit family. As to quaternary structure, tetramer composed of two catalytic chains (alpha and beta), and two inhibitory chains (gamma).

It catalyses the reaction 3',5'-cyclic GMP + H2O = GMP + H(+). Its function is as follows. Participates in processes of transmission and amplification of the visual signal. cGMP-PDEs are the effector molecules in G-protein-mediated phototransduction in vertebrate rods and cones. The chain is Retinal cone rhodopsin-sensitive cGMP 3',5'-cyclic phosphodiesterase subunit gamma (PDE6H) from Bos taurus (Bovine).